A 135-amino-acid polypeptide reads, in one-letter code: Ribosome-binding factor A (135 aa).

The protein belongs to the RbfA family. Monomer. Binds 30S ribosomal subunits, but not 50S ribosomal subunits or 70S ribosomes.

Its subcellular location is the cytoplasm. Its function is as follows. One of several proteins that assist in the late maturation steps of the functional core of the 30S ribosomal subunit. Associates with free 30S ribosomal subunits (but not with 30S subunits that are part of 70S ribosomes or polysomes). Required for efficient processing of 16S rRNA. May interact with the 5'-terminal helix region of 16S rRNA. The sequence is that of Ribosome-binding factor A from Bartonella henselae (strain ATCC 49882 / DSM 28221 / CCUG 30454 / Houston 1) (Rochalimaea henselae).